A 327-amino-acid chain; its full sequence is Tryptophan--tRNA ligase (327 aa).

ATP-binding positions include 9–11 (QPS) and 17–18 (GN). Residues 10 to 18 (PSGDIHIGN) carry the 'HIGH' region motif. Asp-132 is an L-tryptophan binding site. ATP is bound by residues 144–146 (GED), Ile-183, and 192–196 (KMSKS). Residues 192–196 (KMSKS) carry the 'KMSKS' region motif.

It belongs to the class-I aminoacyl-tRNA synthetase family. In terms of assembly, homodimer.

The protein localises to the cytoplasm. The catalysed reaction is tRNA(Trp) + L-tryptophan + ATP = L-tryptophyl-tRNA(Trp) + AMP + diphosphate + H(+). In terms of biological role, catalyzes the attachment of tryptophan to tRNA(Trp). The chain is Tryptophan--tRNA ligase from Caldanaerobacter subterraneus subsp. tengcongensis (strain DSM 15242 / JCM 11007 / NBRC 100824 / MB4) (Thermoanaerobacter tengcongensis).